Here is a 289-residue protein sequence, read N- to C-terminus: tRNA dimethylallyltransferase (289 aa).

9–16 contributes to the ATP binding site; that stretch reads GTTASGKT. 11 to 16 lines the substrate pocket; that stretch reads TASGKT. An interaction with substrate tRNA region spans residues 34 to 37; sequence DSLC.

It belongs to the IPP transferase family. In terms of assembly, monomer. Mg(2+) serves as cofactor.

The catalysed reaction is adenosine(37) in tRNA + dimethylallyl diphosphate = N(6)-dimethylallyladenosine(37) in tRNA + diphosphate. Catalyzes the transfer of a dimethylallyl group onto the adenine at position 37 in tRNAs that read codons beginning with uridine, leading to the formation of N6-(dimethylallyl)adenosine (i(6)A). The sequence is that of tRNA dimethylallyltransferase from Campylobacter jejuni subsp. doylei (strain ATCC BAA-1458 / RM4099 / 269.97).